The chain runs to 66 residues: DNA-directed RNA polymerase subunit Rpo10 (66 aa).

Residues C7, C10, C44, and C45 each contribute to the Zn(2+) site.

The protein belongs to the archaeal Rpo10/eukaryotic RPB10 RNA polymerase subunit family. As to quaternary structure, part of the RNA polymerase complex. It depends on Zn(2+) as a cofactor.

It is found in the cytoplasm. It catalyses the reaction RNA(n) + a ribonucleoside 5'-triphosphate = RNA(n+1) + diphosphate. Functionally, DNA-dependent RNA polymerase (RNAP) catalyzes the transcription of DNA into RNA using the four ribonucleoside triphosphates as substrates. The polypeptide is DNA-directed RNA polymerase subunit Rpo10 (Pyrobaculum islandicum (strain DSM 4184 / JCM 9189 / GEO3)).